Here is a 343-residue protein sequence, read N- to C-terminus: N-acetyl-gamma-glutamyl-phosphate reductase (343 aa).

C147 is an active-site residue.

It belongs to the NAGSA dehydrogenase family. Type 1 subfamily.

The protein localises to the cytoplasm. It catalyses the reaction N-acetyl-L-glutamate 5-semialdehyde + phosphate + NADP(+) = N-acetyl-L-glutamyl 5-phosphate + NADPH + H(+). The protein operates within amino-acid biosynthesis; L-arginine biosynthesis; N(2)-acetyl-L-ornithine from L-glutamate: step 3/4. Functionally, catalyzes the NADPH-dependent reduction of N-acetyl-5-glutamyl phosphate to yield N-acetyl-L-glutamate 5-semialdehyde. The sequence is that of N-acetyl-gamma-glutamyl-phosphate reductase from Listeria monocytogenes serovar 1/2a (strain ATCC BAA-679 / EGD-e).